We begin with the raw amino-acid sequence, 51 residues long: Sperm protamine P1 (51 aa).

The protein belongs to the protamine P1 family. Testis.

The protein resides in the nucleus. The protein localises to the chromosome. Its function is as follows. Protamines substitute for histones in the chromatin of sperm during the haploid phase of spermatogenesis. They compact sperm DNA into a highly condensed, stable and inactive complex. The protein is Sperm protamine P1 (PRM1) of Nasalis larvatus (Proboscis monkey).